We begin with the raw amino-acid sequence, 149 residues long: Calmodulin (149 aa).

An N-acetylalanine modification is found at Ala2. 4 consecutive EF-hand domains span residues 8–43, 44–79, 81–116, and 117–149; these read DQISEFKEAFSLFDKDGDGCITTKELGTVMRSLGQN, PTEAELQDMINEVDADGNGTIDFPEPLNLMARKMKD, DSEEELKEAFRVFDKDQNGFISAAELRHVMTNLGEK, and LTDEEVDEMIREADVDGDGQINYEEFVKVMMAK. 14 residues coordinate Ca(2+): Asp21, Asp23, Asp25, Cys27, Glu32, Asp57, Asp59, Asn61, Thr63, Glu68, Asp94, Asp96, Asn98, and Glu105. An N6,N6,N6-trimethyllysine modification is found at Lys116. Residues Asp130, Asp132, Asp134, Gln136, and Glu141 each contribute to the Ca(2+) site.

It belongs to the calmodulin family.

Calmodulin mediates the control of a large number of enzymes, ion channels and other proteins by Ca(2+). Among the enzymes to be stimulated by the calmodulin-Ca(2+) complex are a number of protein kinases and phosphatases. This is Calmodulin (CAM) from Malus domestica (Apple).